Reading from the N-terminus, the 55-residue chain is Large ribosomal subunit protein bL33 (55 aa).

The protein belongs to the bacterial ribosomal protein bL33 family.

The chain is Large ribosomal subunit protein bL33 from Allorhizobium ampelinum (strain ATCC BAA-846 / DSM 112012 / S4) (Agrobacterium vitis (strain S4)).